The primary structure comprises 199 residues: Imidazoleglycerol-phosphate dehydratase (199 aa).

Belongs to the imidazoleglycerol-phosphate dehydratase family.

It localises to the cytoplasm. The enzyme catalyses D-erythro-1-(imidazol-4-yl)glycerol 3-phosphate = 3-(imidazol-4-yl)-2-oxopropyl phosphate + H2O. Its pathway is amino-acid biosynthesis; L-histidine biosynthesis; L-histidine from 5-phospho-alpha-D-ribose 1-diphosphate: step 6/9. The polypeptide is Imidazoleglycerol-phosphate dehydratase (Rhodospirillum rubrum (strain ATCC 11170 / ATH 1.1.1 / DSM 467 / LMG 4362 / NCIMB 8255 / S1)).